A 724-amino-acid polypeptide reads, in one-letter code: WD repeat-containing protein 91 (724 aa).

Residues 178–207 are a coiled coil; sequence FDSEVQRITSLQEDNEQLRQTVFALQGESR. The segment at 249–365 is disordered; that stretch reads SRNFFSTFLP…PDQTDSANQT (117 aa). Polar residues-rich tracts occupy residues 270–279 and 303–315; these read GPQSSPTQSA and SVSSMTAELSTSH. Position 274 is a phosphoserine (S274). The segment covering 322–333 has biased composition (basic and acidic residues); sequence QDHEKERKELFS. Positions 349–365 are enriched in polar residues; it reads DTQTEAPPDQTDSANQT. WD repeat units lie at residues 389–428, 431–471, 499–532, 537–576, 579–618, 641–679, and 686–724; these read EHHSSIMHCRVDCSGRRVASLDVDGVVKVWAFNPIMQTKA, MSKS…CLYE, AHSGAVMESEPRGSAPVSGQLLLWDTKTVKQQLQ, PGPVAINCTAFNHNGNLLVTGAADGIIRLFDMQRYESALS, AHDGEVYSVEFSYDENTVFSIGEDGKFVQWNIHRCGVKQS, VQVPRGRLFAFDSEGQHVLTCSSTGGNIYRLNKAEAGLE, and GHKAPVVTVDWCSAMDCGTCLTASMDGKIKLSTLLAQKP.

The protein belongs to the WD repeat WDR91 family.

Its subcellular location is the early endosome membrane. The protein resides in the late endosome membrane. In terms of biological role, functions as a negative regulator of the PI3 kinase/PI3K activity associated with endosomal membranes. By modifying the phosphatidylinositol 3-phosphate/PtdInsP3 content of endosomal membranes may regulate endosome fusion, recycling, sorting and early to late endosome transport. In Danio rerio (Zebrafish), this protein is WD repeat-containing protein 91 (wdr91).